Reading from the N-terminus, the 526-residue chain is Amino acid transporter heavy chain SLC3A2 (526 aa).

The segment at 1–31 is disordered; it reads MSQDTEVDMKDVELNELEPEKQPMNAADGAA. Residues 1–75 are Cytoplasmic-facing; the sequence is MSQDTEVDMK…AGSPGWVRTR (75 aa). Ser-2 is subject to Phosphoserine. At Thr-5 the chain carries Phosphothreonine. Positions 7–21 are enriched in basic and acidic residues; that stretch reads VDMKDVELNELEPEK. Lys-42 is covalently cross-linked (Glycyl lysine isopeptide (Lys-Gly) (interchain with G-Cter in ubiquitin)). Ser-58 carries the phosphoserine modification. Residue Lys-59 forms a Glycyl lysine isopeptide (Lys-Gly) (interchain with G-Cter in SUMO2) linkage. The helical; Signal-anchor for type II membrane protein transmembrane segment at 76 to 99 threads the bilayer; the sequence is WALLLLFWLGWLGMLAGAVVIIVR. Residues 100 to 526 lie on the Extracellular side of the membrane; sequence APRCRELPVQ…GLLLQFPFVA (427 aa). 3 N-linked (GlcNAc...) asparagine glycosylation sites follow: Asn-166, Asn-259, and Asn-263. Position 300 is a phosphoserine (Ser-300). Asn-301 carries an N-linked (GlcNAc...) asparagine glycan. Ser-302 bears the Phosphoserine mark. N-linked (GlcNAc...) asparagine glycosylation is found at Asn-318, Asn-385, and Asn-399. Ser-420 is modified (phosphoserine). Asn-509 is a glycosylation site (N-linked (GlcNAc...) asparagine).

It belongs to the SLC3A transporter family. In terms of assembly, disulfide-linked heterodimer with a non-glycosylated light chain (SLC7A5, SLC7A6, SLC7A7, SLC7A8, SLC7A10 or SLC7A11). Interacts with TLCD3A/CT120 and ICAM1. Constitutively and specifically associates with beta-1 integrins (alpha-2/beta-1, alpha-3/beta-1, alpha-5/beta-1 and alpha-6/beta-1), but minimally with alpha-4/beta-1. Interacts with LAPTM4B; recruits SLC3A2 and SLC7A5 to lysosomes to promote leucine uptake into these organelles and is required for mTORC1 activation. Post-translationally, phosphorylation on Ser-300 or Ser-302 and on Ser-420 by ecto-protein kinases favors heterotypic cell-cell interactions. In terms of processing, N-glycosylated; N-glycosylation is crucial for trafficking and stability of SLC3A2 to the plasma membrane. In terms of tissue distribution, detected on the surface of embryonic epithelial cells in the epidermis, thymus, kidney, intestine, brain choroid plexus, and in retina. Detected in adult and embryonic brain, spleen, kidney, intestine and liver, and in adult testis (at protein level). Observed in all adult tissues tested with strongest expression in kidney, small intestine, spleen, thymus and liver. Moderate expression in brain, stomach, heart, testis, lung, skin, pancreas and skeletal muscle. In brain expressed on capillary endothelia in cerebral cortex.

It localises to the apical cell membrane. The protein localises to the cell membrane. Its subcellular location is the cell junction. It is found in the lysosome membrane. The protein resides in the melanosome. It localises to the basolateral cell membrane. Acts as a chaperone that facilitates biogenesis and trafficking of functional transporters heterodimers to the plasma membrane. Forms heterodimer with SLC7 family transporters (SLC7A5, SLC7A6, SLC7A7, SLC7A8, SLC7A10 and SLC7A11), a group of amino-acid antiporters. Heterodimers function as amino acids exchangers, the specificity of the substrate depending on the SLC7A subunit. Heterodimers SLC3A2/SLC7A6 or SLC3A2/SLC7A7 mediate the uptake of dibasic amino acids. Heterodimer SLC3A2/SLC7A11 functions as an antiporter by mediating the exchange of extracellular anionic L-cystine and intracellular L-glutamate across the cellular plasma membrane. SLC3A2/SLC7A10 translocates small neutral L- and D-amino acids across the plasma membrane. SLC3A2/SLC75 or SLC3A2/SLC7A8 translocates neutral amino acids with broad specificity, thyroid hormones and L-DOPA. SLC3A2 is essential for plasma membrane localization, stability, and the transport activity of SLC7A5 and SLC7A8. When associated with LAPTM4B, the heterodimer SLC7A5 is recruited to lysosomes to promote leucine uptake into these organelles, and thereby mediates mTORC1 activation. Modulates integrin-related signaling and is essential for integrin-dependent cell spreading, migration and tumor progression. The sequence is that of Amino acid transporter heavy chain SLC3A2 from Mus musculus (Mouse).